The following is a 108-amino-acid chain: uncharacterized protein (108 aa).

The interval 56-108 (ELPSRGCLPAPRPESGQGRLSTGISQNGGRSSAQPCPRCIAGESGHFSHTKNH) is disordered. Residues 73–89 (GRLSTGISQNGGRSSAQ) are compositionally biased toward polar residues.

This is an uncharacterized protein from Homo sapiens (Human).